Here is a 114-residue protein sequence, read N- to C-terminus: Monothiol glutaredoxin-S8 (114 aa).

A Glutaredoxin domain is found at 1-113; it reads MDRVTRLASQ…PLLRDAGALW (113 aa). Residue Cys-21 participates in [2Fe-2S] cluster binding.

It belongs to the glutaredoxin family. CC-type subfamily.

It localises to the cytoplasm. Functionally, may only reduce GSH-thiol disulfides, but not protein disulfides. This is Monothiol glutaredoxin-S8 (GRXS8) from Oryza sativa subsp. japonica (Rice).